We begin with the raw amino-acid sequence, 879 residues long: Metabotropic glutamate receptor 3 (879 aa).

The N-terminal stretch at 1–22 (MKMLTRLQVLMLALFSKGFLVS) is a signal peptide. Residues 23–576 (LGDHNFMRRE…EDYIRWEDAW (554 aa)) lie on the Extracellular side of the membrane. An intrachain disulfide couples Cys-57 to Cys-99. Residues Ser-151 and 172-174 (AST) contribute to the L-glutamate site. Asn-209 carries an N-linked (GlcNAc...) asparagine glycan. Tyr-222 lines the L-glutamate pocket. 7 disulfide bridges follow: Cys-240–Cys-527, Cys-361–Cys-373, Cys-412–Cys-419, Cys-509–Cys-528, Cys-513–Cys-531, Cys-534–Cys-546, and Cys-549–Cys-562. An N-linked (GlcNAc...) asparagine glycan is attached at Asn-292. Asp-301 serves as a coordination point for L-glutamate. Residue Lys-389 participates in L-glutamate binding. Residues Asn-414 and Asn-439 are each glycosylated (N-linked (GlcNAc...) asparagine). The helical transmembrane segment at 577–599 (AIGPVTIACLGFMCTCIVITVFI) threads the bilayer. Topologically, residues 600 to 613 (KHNNTPLVKASGRE) are cytoplasmic. Residues 614–634 (LCYILLFGVSLSYCMTFFFIA) traverse the membrane as a helical segment. The Extracellular portion of the chain corresponds to 635-645 (KPSPVICALRR). Residues 646 to 664 (LGLGTSFAICYSALLTKTN) form a helical membrane-spanning segment. Residues 665 to 688 (CIARIFDGVKNGAQRPKFISPSSQ) lie on the Cytoplasmic side of the membrane. A helical membrane pass occupies residues 689–709 (VFICLGLILVQIVMVSVWLIL). Residues 710–734 (ETPGTRRYTLPEKRETVILKCNVKD) are Extracellular-facing. Residues 735–756 (SSMLISLTYDVVLVILCTVYAF) traverse the membrane as a helical segment. The Cytoplasmic segment spans residues 757–769 (KTRKCPENFNEAK). The helical transmembrane segment at 770–792 (FIGFTMYTTCIIWLAFLPIFYVT) threads the bilayer. The Extracellular portion of the chain corresponds to 793–802 (SSDYRVQTTT). The chain crosses the membrane as a helical span at residues 803 to 828 (MCISVSLSGFVVLGCLFAPKVHIVLF). Topologically, residues 829–879 (QPQKNVVTHRLHLNRFSVSGTATTYSQSSASTYVPTVCNGREVLDSTTSSL) are cytoplasmic.

This sequence belongs to the G-protein coupled receptor 3 family. As to quaternary structure, interacts with TAMALIN.

The protein localises to the cell membrane. Its function is as follows. G-protein coupled receptor for glutamate. Ligand binding causes a conformation change that triggers signaling via guanine nucleotide-binding proteins (G proteins) and modulates the activity of down-stream effectors. Signaling inhibits adenylate cyclase activity. The chain is Metabotropic glutamate receptor 3 (Grm3) from Mus musculus (Mouse).